Reading from the N-terminus, the 448-residue chain is Putative F-box/LRR-repeat protein At5g25860 (448 aa).

Residues 11–58 (RDAVNCLPDEILAKILSYLPTKRAVSTSLISKRWRNLFALMIQLFESQ) form the F-box domain. LRR repeat units follow at residues 82–106 (QESF…SILC), 185–214 (FLHA…FLHD), 215–240 (LRGY…TVHF), 310–341 (TLSL…YFES), and 342–367 (NEKE…VLKG).

The protein is Putative F-box/LRR-repeat protein At5g25860 of Arabidopsis thaliana (Mouse-ear cress).